The following is a 263-amino-acid chain: N-glycosylase/DNA lyase (263 aa).

Residues Gln-43, Ser-71, and Trp-82 each coordinate 8-oxoguanine. A helix-hairpin-helix region spans residues 139-204 (RRYYFENMMG…EDVRIKAYTE (66 aa)). Residue Lys-164 is the Schiff-base intermediate with DNA of the active site. 8-oxoguanine is bound by residues Phe-168 and Pro-194. Residue Asp-196 is part of the active site. The 8-oxoguanine site is built by Asp-230 and Trp-234.

It belongs to the archaeal N-glycosylase/DNA lyase (AGOG) family.

It carries out the reaction 2'-deoxyribonucleotide-(2'-deoxyribose 5'-phosphate)-2'-deoxyribonucleotide-DNA = a 3'-end 2'-deoxyribonucleotide-(2,3-dehydro-2,3-deoxyribose 5'-phosphate)-DNA + a 5'-end 5'-phospho-2'-deoxyribonucleoside-DNA + H(+). Its function is as follows. DNA repair enzyme that is part of the base excision repair (BER) pathway; protects from oxidative damage by removing the major product of DNA oxidation, 8-oxoguanine (GO), from single- and double-stranded DNA substrates. The polypeptide is N-glycosylase/DNA lyase (Thermococcus kodakarensis (strain ATCC BAA-918 / JCM 12380 / KOD1) (Pyrococcus kodakaraensis (strain KOD1))).